A 256-amino-acid polypeptide reads, in one-letter code: Trypsinogen-like protein 3 (256 aa).

An N-terminal signal peptide occupies residues 1 to 14 (MILLLVLALGLAGA). One can recognise a Peptidase S1 domain in the interval 15–237 (SPLGEYKECP…YNDWIHQVMA (223 aa)). Disulfide bonds link cysteine 23/cysteine 153, cysteine 41/cysteine 57, cysteine 125/cysteine 226, cysteine 132/cysteine 199, cysteine 164/cysteine 180, and cysteine 189/cysteine 213.

This sequence belongs to the peptidase S1 family.

The protein is Trypsinogen-like protein 3 (trp3) of Pseudopleuronectes americanus (Winter flounder).